The sequence spans 860 residues: Translation initiation factor IF-2 (860 aa).

Positions 1 to 11 (MSDTKSGDDKT) are enriched in basic and acidic residues. Residues 1-265 (MSDTKSGDDK…MRRRQEKFKR (265 aa)) form a disordered region. Low complexity predominate over residues 79 to 88 (AAPVVQEAPK). Residues 110-183 (SRSEMEARRR…RRRAEEEARR (74 aa)) show a composition bias toward basic and acidic residues. The tr-type G domain maps to 358–525 (PRPPVVTIMG…AILLQAEILD (168 aa)). Residues 367–374 (GHVDHGKT) form a G1 region. GTP is bound at residue 367–374 (GHVDHGKT). Residues 392–396 (GITQH) are G2. Residues 413 to 416 (DTPG) form a G3 region. GTP is bound by residues 413 to 417 (DTPGH) and 467 to 470 (NKID). The interval 467–470 (NKID) is G4. The segment at 503 to 505 (SAT) is G5.

Belongs to the TRAFAC class translation factor GTPase superfamily. Classic translation factor GTPase family. IF-2 subfamily.

The protein localises to the cytoplasm. In terms of biological role, one of the essential components for the initiation of protein synthesis. Protects formylmethionyl-tRNA from spontaneous hydrolysis and promotes its binding to the 30S ribosomal subunits. Also involved in the hydrolysis of GTP during the formation of the 70S ribosomal complex. This chain is Translation initiation factor IF-2, found in Mesorhizobium japonicum (strain LMG 29417 / CECT 9101 / MAFF 303099) (Mesorhizobium loti (strain MAFF 303099)).